Here is a 550-residue protein sequence, read N- to C-terminus: Chaperonin GroEL (550 aa).

ATP is bound by residues Thr-30–Pro-33, Lys-51, Asp-87–Thr-91, Gly-415, and Asp-495.

This sequence belongs to the chaperonin (HSP60) family. As to quaternary structure, forms a cylinder of 14 subunits composed of two heptameric rings stacked back-to-back. Interacts with the co-chaperonin GroES.

The protein resides in the cytoplasm. The enzyme catalyses ATP + H2O + a folded polypeptide = ADP + phosphate + an unfolded polypeptide.. Its function is as follows. Together with its co-chaperonin GroES, plays an essential role in assisting protein folding. The GroEL-GroES system forms a nano-cage that allows encapsulation of the non-native substrate proteins and provides a physical environment optimized to promote and accelerate protein folding. In Dechloromonas aromatica (strain RCB), this protein is Chaperonin GroEL.